The primary structure comprises 616 residues: Chaperone protein HtpG (616 aa).

The a; substrate-binding stretch occupies residues 1–333 (MKKQFDTEVN…CQDLPLNVSR (333 aa)). Residues 334 to 542 (EILQQNKILS…SNDPTYQMQK (209 aa)) form a b region. Residues 543–616 (IMLSMGQEVK…INEFIEKDFL (74 aa)) are c.

Belongs to the heat shock protein 90 family. As to quaternary structure, homodimer.

It localises to the cytoplasm. In terms of biological role, molecular chaperone. Has ATPase activity. This is Chaperone protein HtpG from Borreliella burgdorferi (strain ATCC 35210 / DSM 4680 / CIP 102532 / B31) (Borrelia burgdorferi).